We begin with the raw amino-acid sequence, 539 residues long: Glucose-6-phosphate isomerase (539 aa).

Catalysis depends on Glu340, which acts as the Proton donor. Residues His371 and Lys500 contribute to the active site.

This sequence belongs to the GPI family.

It localises to the cytoplasm. It catalyses the reaction alpha-D-glucose 6-phosphate = beta-D-fructose 6-phosphate. It participates in carbohydrate biosynthesis; gluconeogenesis. Its pathway is carbohydrate degradation; glycolysis; D-glyceraldehyde 3-phosphate and glycerone phosphate from D-glucose: step 2/4. Functionally, catalyzes the reversible isomerization of glucose-6-phosphate to fructose-6-phosphate. This is Glucose-6-phosphate isomerase from Ruegeria pomeroyi (strain ATCC 700808 / DSM 15171 / DSS-3) (Silicibacter pomeroyi).